Reading from the N-terminus, the 569-residue chain is Proline--tRNA ligase (569 aa).

This sequence belongs to the class-II aminoacyl-tRNA synthetase family. ProS type 1 subfamily. As to quaternary structure, homodimer.

The protein localises to the cytoplasm. The enzyme catalyses tRNA(Pro) + L-proline + ATP = L-prolyl-tRNA(Pro) + AMP + diphosphate. In terms of biological role, catalyzes the attachment of proline to tRNA(Pro) in a two-step reaction: proline is first activated by ATP to form Pro-AMP and then transferred to the acceptor end of tRNA(Pro). As ProRS can inadvertently accommodate and process non-cognate amino acids such as alanine and cysteine, to avoid such errors it has two additional distinct editing activities against alanine. One activity is designated as 'pretransfer' editing and involves the tRNA(Pro)-independent hydrolysis of activated Ala-AMP. The other activity is designated 'posttransfer' editing and involves deacylation of mischarged Ala-tRNA(Pro). The misacylated Cys-tRNA(Pro) is not edited by ProRS. In Levilactobacillus brevis (strain ATCC 367 / BCRC 12310 / CIP 105137 / JCM 1170 / LMG 11437 / NCIMB 947 / NCTC 947) (Lactobacillus brevis), this protein is Proline--tRNA ligase.